The sequence spans 632 residues: Epithelial sodium channel subunit alpha (632 aa).

Residues 1-49 (MTKEEKNEKEALIEFFSSYRELFEFFCSNTTIHGAIRLVCSRRNRMKTA) lie on the Cytoplasmic side of the membrane. The helical transmembrane segment at 50-70 (FWLVLFLVTFGLMYWQFGLLF) threads the bilayer. Residues 71-520 (GQYFSYPVSI…SQWSLWFGSS (450 aa)) are Extracellular-facing. Intrachain disulfides connect C97-C264, C189-C196, C241-C248, C355-C440, C377-C417, C377-C436, C381-C432, C390-C417, C390-C440, and C392-C406. The chain crosses the membrane as a helical span at residues 521–541 (VLSVVEMLELVIDFVIIGVMI). Topologically, residues 542–632 (LLHRYYYKKA…YYEENGGRRN (91 aa)) are cytoplasmic. A compositionally biased stretch (low complexity) spans 612–622 (SRSSSMRSNRS). Residues 612–632 (SRSSSMRSNRSYYEENGGRRN) form a disordered region. Residues 623–632 (YYEENGGRRN) show a composition bias toward basic and acidic residues.

Belongs to the amiloride-sensitive sodium channel (TC 1.A.6) family. SCNN1A subfamily. Heterotrimer; containing an alpha/SCNN1A, a beta/SCNN1B and a gamma/SCNN1G subunit. Interacts with shroom1.

It is found in the apical cell membrane. Its subcellular location is the cell projection. It localises to the cilium. The protein localises to the cytoplasmic granule. The protein resides in the cytoplasm. It is found in the cytoplasmic vesicle. Its subcellular location is the secretory vesicle. It localises to the acrosome. The protein localises to the flagellum. The enzyme catalyses Na(+)(in) = Na(+)(out). Its activity is regulated as follows. Originally identified and characterized by its inhibition by the diuretic drug amiloride. In terms of biological role, this is one of the three pore-forming subunits of the heterotrimeric epithelial sodium channel (ENaC), a critical regulator of sodium balance and fluid homeostasis. ENaC operates in epithelial tissues, where it mediates the electrodiffusion of sodium ions from extracellular fluid through the apical membrane of cells, with water following osmotically. It plays a key role in maintaining sodium homeostasis through electrogenic sodium reabsorption in the kidneys. This Xenopus laevis (African clawed frog) protein is Epithelial sodium channel subunit alpha.